The sequence spans 142 residues: ATP synthase epsilon chain, chloroplastic (142 aa).

The protein belongs to the ATPase epsilon chain family. In terms of assembly, F-type ATPases have 2 components, CF(1) - the catalytic core - and CF(0) - the membrane proton channel. CF(1) has five subunits: alpha(3), beta(3), gamma(1), delta(1), epsilon(1). CF(0) has three main subunits: a, b and c.

Its subcellular location is the plastid. The protein localises to the chloroplast thylakoid membrane. Functionally, produces ATP from ADP in the presence of a proton gradient across the membrane. The sequence is that of ATP synthase epsilon chain, chloroplastic from Ostreococcus tauri.